The chain runs to 192 residues: Ion-translocating oxidoreductase complex subunit A (192 aa).

6 consecutive transmembrane segments (helical) span residues 5 to 25, 39 to 59, 65 to 85, 102 to 122, 134 to 154, and 171 to 191; these read LLLLISTVLVNNFVLVKFLGL, IGMSMATTFVLTLASVLSYLV, LPFELGYLRTMSFILVIAVVV, ALGIYLPLITTNCAVLGVALL, AIYGFGAAVGFSLVLILFSAM, and AIAMITAGLMSLAFMGFTGLV.

The protein belongs to the NqrDE/RnfAE family. As to quaternary structure, the complex is composed of six subunits: RnfA, RnfB, RnfC, RnfD, RnfE and RnfG.

The protein localises to the cell inner membrane. In terms of biological role, part of a membrane-bound complex that couples electron transfer with translocation of ions across the membrane. This is Ion-translocating oxidoreductase complex subunit A from Shewanella sediminis (strain HAW-EB3).